The following is a 132-amino-acid chain: uncharacterized protein (132 aa).

The next 3 membrane-spanning stretches (helical) occupy residues 19–39, 58–78, and 93–113; these read FTWI…FIFL, IGLR…VAVM, and LIAY…CAAL.

The protein belongs to the bacteriophage holin family. Cp-1 holin subfamily.

The protein localises to the cell membrane. This is an uncharacterized protein from Clostridium perfringens.